The primary structure comprises 535 residues: Dual specificity mitogen-activated protein kinase kinase 7 (535 aa).

Position 2 is an N-acetylalanine (Ala2). Residues 2 to 30 adopt a coiled-coil conformation; the sequence is AASSLEQKLSRLEAKLKQENREARRRIDL. Positions 37-73 are d domain; that stretch reads QRPRPIIVITLSPAPAPSQRAALQLPLANDGGSRSPS. Residues 63-93 form a disordered region; that stretch reads LANDGGSRSPSSESSPQHPTPPTRPRHMLGL. Residues 69–79 show a composition bias toward low complexity; that stretch reads SRSPSSESSPQ. The Protein kinase domain occupies 136–396; sequence LENLGEMGSG…YNKLLEHSFI (261 aa). ATP is bound by residues 142–150 and Lys165; that span reads MGSGTCGQV. The active-site Proton acceptor is Asp259. Ser287 carries the post-translational modification Phosphoserine; by MAP3K. Residue Thr291 is modified to Phosphothreonine; by MAP3K. The DVD domain stretch occupies residues 393–416; the sequence is HSFIKHYEILEVDVASWFKDVMAK. Ser427 is subject to Phosphoserine.

It belongs to the protein kinase superfamily. STE Ser/Thr protein kinase family. MAP kinase kinase subfamily. Interacts with RASSF7, the interaction promotes phosphorylation. Interacts with VRK2. Interacts (via its D domain) with its substrates MAPK8/JNK1, MAPK9/JNK2 and MAPK10/JNK3. Interacts (via its DVD domain) with MAP3Ks activators like MAP3K5/ASK1 and MAP3K1/MEKK1. Interacts with SH3RF1, MAPK8IP1/JIP1, MAPK8IP2/JIP2 and MAPK8IP3/JIP3 scaffold proteins. Found in a complex with SH3RF1, RAC1, MAP3K11/MLK3, MAPK8IP1/JIP1 and MAPK8/JNK1. Found in a complex with SH3RF1, RAC2, MAP3K7/TAK1, MAPK8IP1/JIP1, MAPK8/JNK1 and MAPK9/JNK2. Mg(2+) serves as cofactor. Post-translationally, activated by phosphorylation on Ser-287 and Thr-291 by MAP kinase kinase kinases (MAP3Ks). Expressed at high levels in brain, lung, liver, skeletal muscle, kidney, and testis and at lower levels in the heart and spleen.

It is found in the nucleus. Its subcellular location is the cytoplasm. It carries out the reaction L-seryl-[protein] + ATP = O-phospho-L-seryl-[protein] + ADP + H(+). The catalysed reaction is L-threonyl-[protein] + ATP = O-phospho-L-threonyl-[protein] + ADP + H(+). It catalyses the reaction L-tyrosyl-[protein] + ATP = O-phospho-L-tyrosyl-[protein] + ADP + H(+). With respect to regulation, activated by phosphorylation by specific MAP kinase kinase kinases such as MAP3K1/MEKK1, MAP3K3/MEKK3, MAP3K11/MLK3 and MAP3K12/DLK. Isoforms 3 and 4 have lower basal activity but a higher level of inducible activation, than isoforms 2, 6, 7 and 8. Its function is as follows. Dual specificity protein kinase which acts as an essential component of the MAP kinase signal transduction pathway. Essential component of the stress-activated protein kinase/c-Jun N-terminal kinase (SAP/JNK) signaling pathway. With MAP2K4/MKK4, is the one of the only known kinase to directly activate the stress-activated protein kinase/c-Jun N-terminal kinases MAPK8/JNK1, MAPK9/JNK2 and MAPK10/JNK3. MAP2K4/MKK4 and MAP2K7/MKK7 both activate the JNKs by phosphorylation, but they differ in their preference for the phosphorylation site in the Thr-Pro-Tyr motif. MAP2K4/MKK4 shows preference for phosphorylation of the Tyr residue and MAP2K7/MKK7 for the Thr residue. The monophosphorylation of JNKs on the Thr residue is sufficient to increase JNK activity indicating that MAP2K7/MKK7 is important to trigger JNK activity, while the additional phosphorylation of the Tyr residue by MAP2K4/MKK4 ensures optimal JNK activation. Has a specific role in JNK signal transduction pathway activated by pro-inflammatory cytokines. The MKK/JNK signaling pathway is also involved in mitochondrial death signaling pathway, including the release cytochrome c, leading to apoptosis. Part of a non-canonical MAPK signaling pathway, composed of the upstream MAP3K12 kinase and downstream MAP kinases MAPK1/ERK2 and MAPK3/ERK1, that enhances the AP-1-mediated transcription of APP in response to APOE. The polypeptide is Dual specificity mitogen-activated protein kinase kinase 7 (Mus musculus (Mouse)).